Here is a 667-residue protein sequence, read N- to C-terminus: Smc-like protein Sph2 (667 aa).

Coiled coils occupy residues 153–295 (GSIQ…SLAT) and 355–517 (GRLD…AITA).

The protein belongs to the Sph1/Sph2 family.

It localises to the cytoplasm. In terms of biological role, may play a role in replication. The polypeptide is Smc-like protein Sph2 (sph2) (Halobacterium salinarum (strain ATCC 29341 / DSM 671 / R1)).